Here is a 714-residue protein sequence, read N- to C-terminus: Phosphoribosylformylglycinamidine synthase subunit PurL (714 aa).

Histidine 34 is a catalytic residue. ATP is bound at residue tyrosine 37. Residue glutamate 78 coordinates Mg(2+). Substrate contacts are provided by residues 79–82 and arginine 101; that span reads SHNH. Histidine 80 serves as the catalytic Proton acceptor. Aspartate 102 contacts Mg(2+). Glutamine 226 lines the substrate pocket. Residue aspartate 254 coordinates Mg(2+). 298 to 300 is a binding site for substrate; that stretch reads ESQ. 2 residues coordinate ATP: aspartate 474 and glycine 511. Asparagine 512 lines the Mg(2+) pocket. Substrate is bound at residue serine 514.

It belongs to the FGAMS family. As to quaternary structure, monomer. Part of the FGAM synthase complex composed of 1 PurL, 1 PurQ and 2 PurS subunits.

The protein resides in the cytoplasm. It catalyses the reaction N(2)-formyl-N(1)-(5-phospho-beta-D-ribosyl)glycinamide + L-glutamine + ATP + H2O = 2-formamido-N(1)-(5-O-phospho-beta-D-ribosyl)acetamidine + L-glutamate + ADP + phosphate + H(+). It participates in purine metabolism; IMP biosynthesis via de novo pathway; 5-amino-1-(5-phospho-D-ribosyl)imidazole from N(2)-formyl-N(1)-(5-phospho-D-ribosyl)glycinamide: step 1/2. Its function is as follows. Part of the phosphoribosylformylglycinamidine synthase complex involved in the purines biosynthetic pathway. Catalyzes the ATP-dependent conversion of formylglycinamide ribonucleotide (FGAR) and glutamine to yield formylglycinamidine ribonucleotide (FGAM) and glutamate. The FGAM synthase complex is composed of three subunits. PurQ produces an ammonia molecule by converting glutamine to glutamate. PurL transfers the ammonia molecule to FGAR to form FGAM in an ATP-dependent manner. PurS interacts with PurQ and PurL and is thought to assist in the transfer of the ammonia molecule from PurQ to PurL. This chain is Phosphoribosylformylglycinamidine synthase subunit PurL, found in Methanothermobacter marburgensis (strain ATCC BAA-927 / DSM 2133 / JCM 14651 / NBRC 100331 / OCM 82 / Marburg) (Methanobacterium thermoautotrophicum).